Here is a 230-residue protein sequence, read N- to C-terminus: RNA chaperone ProQ (230 aa).

A compositionally biased stretch (basic and acidic residues) spans 105 to 125 (EAKARVQAQREQHQAKKREAG). The segment at 105–182 (EAKARVQAQR…EQRKPVTDTT (78 aa)) is disordered. Over residues 154–167 (PSRPQAARPASAPR) the composition is skewed to low complexity. A compositionally biased stretch (basic and acidic residues) spans 168–178 (AESRVEQRKPV).

It belongs to the ProQ family.

It is found in the cytoplasm. RNA chaperone with significant RNA binding, RNA strand exchange and RNA duplexing activities. May regulate ProP activity through an RNA-based, post-transcriptional mechanism. This is RNA chaperone ProQ from Erwinia tasmaniensis (strain DSM 17950 / CFBP 7177 / CIP 109463 / NCPPB 4357 / Et1/99).